We begin with the raw amino-acid sequence, 473 residues long: Ribulose bisphosphate carboxylase large chain (473 aa).

Asparagine 116 and threonine 166 together coordinate substrate. Lysine 168 (proton acceptor) is an active-site residue. A substrate-binding site is contributed by lysine 170. 3 residues coordinate Mg(2+): lysine 194, aspartate 196, and glutamate 197. At lysine 194 the chain carries N6-carboxylysine. Histidine 287 serves as the catalytic Proton acceptor. Substrate contacts are provided by arginine 288, histidine 320, and serine 372.

It belongs to the RuBisCO large chain family. Type I subfamily. Heterohexadecamer of 8 large chains and 8 small chains. Mg(2+) serves as cofactor.

It carries out the reaction 2 (2R)-3-phosphoglycerate + 2 H(+) = D-ribulose 1,5-bisphosphate + CO2 + H2O. The enzyme catalyses D-ribulose 1,5-bisphosphate + O2 = 2-phosphoglycolate + (2R)-3-phosphoglycerate + 2 H(+). Its function is as follows. RuBisCO catalyzes two reactions: the carboxylation of D-ribulose 1,5-bisphosphate, the primary event in carbon dioxide fixation, as well as the oxidative fragmentation of the pentose substrate. Both reactions occur simultaneously and in competition at the same active site. The polypeptide is Ribulose bisphosphate carboxylase large chain (Nitrobacter winogradskyi (Nitrobacter agilis)).